A 101-amino-acid polypeptide reads, in one-letter code: Large ribosomal subunit protein uL23 (101 aa).

Belongs to the universal ribosomal protein uL23 family. Part of the 50S ribosomal subunit. Contacts protein L29, and trigger factor when it is bound to the ribosome.

One of the early assembly proteins it binds 23S rRNA. One of the proteins that surrounds the polypeptide exit tunnel on the outside of the ribosome. Forms the main docking site for trigger factor binding to the ribosome. This chain is Large ribosomal subunit protein uL23, found in Corynebacterium jeikeium (strain K411).